A 319-amino-acid polypeptide reads, in one-letter code: tRNA dimethylallyltransferase (319 aa).

11–18 is an ATP binding site; it reads GPTCSGKS. 13–18 contributes to the substrate binding site; it reads TCSGKS. 2 interaction with substrate tRNA regions span residues 36–39 and 160–164; these read DSMQ and QRIAR.

Belongs to the IPP transferase family. In terms of assembly, monomer. Mg(2+) serves as cofactor.

It carries out the reaction adenosine(37) in tRNA + dimethylallyl diphosphate = N(6)-dimethylallyladenosine(37) in tRNA + diphosphate. Its function is as follows. Catalyzes the transfer of a dimethylallyl group onto the adenine at position 37 in tRNAs that read codons beginning with uridine, leading to the formation of N6-(dimethylallyl)adenosine (i(6)A). The chain is tRNA dimethylallyltransferase from Granulibacter bethesdensis (strain ATCC BAA-1260 / CGDNIH1).